The following is a 177-amino-acid chain: Large ribosomal subunit protein uL5 (177 aa).

The protein belongs to the universal ribosomal protein uL5 family. In terms of assembly, part of the 50S ribosomal subunit; part of the 5S rRNA/L5/L18/L25 subcomplex. Contacts the 5S rRNA and the P site tRNA. Forms a bridge to the 30S subunit in the 70S ribosome.

Functionally, this is one of the proteins that bind and probably mediate the attachment of the 5S RNA into the large ribosomal subunit, where it forms part of the central protuberance. In the 70S ribosome it contacts protein S13 of the 30S subunit (bridge B1b), connecting the 2 subunits; this bridge is implicated in subunit movement. Contacts the P site tRNA; the 5S rRNA and some of its associated proteins might help stabilize positioning of ribosome-bound tRNAs. This chain is Large ribosomal subunit protein uL5, found in Ehrlichia chaffeensis (strain ATCC CRL-10679 / Arkansas).